A 1353-amino-acid chain; its full sequence is Stress response protein NST1 (1353 aa).

The span at 1–12 (MSSKSQQPPTGL) shows a compositional bias: polar residues. 9 disordered regions span residues 1–66 (MSSK…FFNF), 216–422 (NANA…TQSS), 503–522 (NGLR…VEVD), 531–618 (DHRA…SFGS), 652–694 (RRSV…AEEG), 727–882 (LREL…AKET), 979–1119 (GLKS…DDAF), 1140–1276 (GSLI…GAGV), and 1308–1337 (GGTA…HQQQ). Basic residues predominate over residues 16–25 (AAKKRAKKAA). Over residues 26-45 (KQSQNPQPQSAPQTSSQTPA) the composition is skewed to low complexity. Residues 46–59 (SVPPLPPASVPDPL) are compositionally biased toward pro residues. Positions 218 to 229 (NARSFPSPQQTI) are enriched in polar residues. The segment covering 242–254 (REEEYDDEEEIEE) has biased composition (acidic residues). The span at 268–277 (KKNKKKKKKG) shows a compositional bias: basic residues. Residues 287 to 300 (VEPPAPLPPLPPPS) are compositionally biased toward pro residues. Residues 317–330 (LPTHQPQPLSQQPP) are compositionally biased toward low complexity. A compositionally biased stretch (pro residues) spans 331 to 349 (SLNPLPPPAPASAPTPTPP). Over residues 368–388 (PARSARAAGKAPASAAPPHNA) the composition is skewed to low complexity. A compositionally biased stretch (basic and acidic residues) spans 531–541 (DHRAPELHDHD). Over residues 542–583 (PDDLDGEESEEYDDDDDYADDDELDDDDIGTDEADVGDEIDE) the composition is skewed to acidic residues. The span at 654–665 (SVREEQNLRDMQ) shows a compositional bias: basic and acidic residues. Residues 666 to 681 (EETDEEEEEEDDDESR) are compositionally biased toward acidic residues. Basic and acidic residues-rich tracts occupy residues 682–694 (DEPM…AEEG), 727–750 (LREL…EAQK), and 760–882 (QKAE…AKET). Residues 713–944 (AYRERVAKQR…AAQQAQRERA (232 aa)) adopt a coiled-coil conformation. Residues 1009–1021 (TNATPGRSMQKTP) are compositionally biased toward polar residues. Positions 1154–1165 (PTPPAPIAPPNL) are enriched in pro residues. 2 stretches are compositionally biased toward polar residues: residues 1174 to 1187 (SDGQ…LRST) and 1209 to 1220 (QPQQRRPTTSWD).

It belongs to the NST1 family.

The protein resides in the cytoplasm. Functionally, may act as a negative regulator of salt tolerance. The protein is Stress response protein NST1 (NST1) of Cryptococcus neoformans var. neoformans serotype D (strain B-3501A) (Filobasidiella neoformans).